The primary structure comprises 368 residues: Large ribosomal subunit protein mL46 (368 aa).

A disordered region spans residues 53–81; it reads TATATTTTTLPPPHPPVTTSTGTHAATST. Positions 69–81 are enriched in low complexity; that stretch reads VTTSTGTHAATST.

The protein belongs to the mitochondrion-specific ribosomal protein mL46 family. As to quaternary structure, component of the mitochondrial large ribosomal subunit (mt-LSU). Mature N.crassa 74S mitochondrial ribosomes consist of a small (37S) and a large (54S) subunit. The 37S small subunit contains a 16S ribosomal RNA (16S mt-rRNA) and 32 different proteins. The 54S large subunit contains a 23S rRNA (23S mt-rRNA) and 42 different proteins.

Its subcellular location is the mitochondrion. Its function is as follows. Component of the mitochondrial ribosome (mitoribosome), a dedicated translation machinery responsible for the synthesis of mitochondrial genome-encoded proteins, including at least some of the essential transmembrane subunits of the mitochondrial respiratory chain. The mitoribosomes are attached to the mitochondrial inner membrane and translation products are cotranslationally integrated into the membrane. This is Large ribosomal subunit protein mL46 (mrpl17) from Neurospora crassa (strain ATCC 24698 / 74-OR23-1A / CBS 708.71 / DSM 1257 / FGSC 987).